The chain runs to 265 residues: Acrosomal protein SP-10 (265 aa).

Residues 1–21 form the signal peptide; sequence MNRFLLLMSLYLLGSARGTSS. The segment at 62–181 is disordered; that stretch reads LNTLSEHGSS…EQASGAPISS (120 aa). 16 consecutive repeat copies span residues 66-70, 71-75, 85-88, 91-95, 110-114, 115-119, 120-123, 125-129, 135-139, 140-144, 145-148, 150-154, 155-159, 160-164, 165-168, and 170-174. Positions 66 to 95 are 3 X 5 AA repeats of S-E-H-[GA]-S; sequence SEHGSSEHGSSKHTVAEHTSGEHAESEHAS. A compositionally biased stretch (basic and acidic residues) spans 69-110; the sequence is GSSEHGSSKHTVAEHTSGEHAESEHASGEPAATEHAEGEHTV. The interval 85–168 is 4 X 4 AA repeats of S-G-E-H; that stretch reads SGEHAESEHA…ASGEQPSGEH (84 aa). Residues 110-174 are 9 X 5 AA repeats of [SV]-G-E-Q-[PSA]; it reads VGEQPSGEQP…SGEHASGEQA (65 aa). A compositionally biased stretch (polar residues) spans 152–163; sequence EQPSGEQASGEQ. N-linked (GlcNAc...) asparagine glycosylation occurs at N258.

Testis.

It is found in the cytoplasmic vesicle. The protein resides in the secretory vesicle. Its subcellular location is the acrosome. This is Acrosomal protein SP-10 (ACRV1) from Homo sapiens (Human).